A 282-amino-acid polypeptide reads, in one-letter code: Phosphate import ATP-binding protein PstB (282 aa).

Polar residues predominate over residues 1-25 (MKALNANISTMSEVSRSATPQSDSP). The disordered stretch occupies residues 1-26 (MKALNANISTMSEVSRSATPQSDSPA). An ABC transporter domain is found at 36 to 277 (IRIANFNAWY…PQEKRTDDYV (242 aa)). 68-75 (GPSGCGKS) lines the ATP pocket.

It belongs to the ABC transporter superfamily. Phosphate importer (TC 3.A.1.7) family. As to quaternary structure, the complex is composed of two ATP-binding proteins (PstB), two transmembrane proteins (PstC and PstA) and a solute-binding protein (PstS).

The protein localises to the cell inner membrane. It carries out the reaction phosphate(out) + ATP + H2O = ADP + 2 phosphate(in) + H(+). Part of the ABC transporter complex PstSACB involved in phosphate import. Responsible for energy coupling to the transport system. This is Phosphate import ATP-binding protein PstB from Rhodopirellula baltica (strain DSM 10527 / NCIMB 13988 / SH1).